A 396-amino-acid polypeptide reads, in one-letter code: Serine/threonine-protein kinase 32A (396 aa).

A lipid anchor (N-myristoyl glycine) is attached at G2. The Protein kinase domain maps to 23–281 (FEILRAIGKG…LSDVQNFPYM (259 aa)). ATP is bound by residues 29–37 (IGKGSFGKV) and K52. Catalysis depends on D146, which acts as the Proton acceptor. The interval 373–396 (KRQPNLALEQTKDPQGEDGQNNNL) is disordered.

The protein belongs to the protein kinase superfamily. Ser/Thr protein kinase family. Mg(2+) is required as a cofactor.

The protein resides in the cell membrane. The enzyme catalyses L-seryl-[protein] + ATP = O-phospho-L-seryl-[protein] + ADP + H(+). The catalysed reaction is L-threonyl-[protein] + ATP = O-phospho-L-threonyl-[protein] + ADP + H(+). This is Serine/threonine-protein kinase 32A (STK32A) from Homo sapiens (Human).